A 339-amino-acid polypeptide reads, in one-letter code: MEITLFDPIDAHLHVRENALLKAVLRYSSEPFSAAVIMPNLSKPLIDTPTTLEYEEEILKNSSNFKPLMSLYFNDDLTLEELQRAHEKGVRFLKLYPKGMTTNAQNGTSDLLDEKTLEILENAQKLGFILCIHAEQAGFCLDKEFLCHSVLETFALSFPKLKIIIEHLSDWRSIALIEKHDNLYATLTLHHISMTLDDLLGGSLNPHCFCKPLIKTKKDQERLLSLALKAHPKISFGSDSAPHFVSKKHSANIPAGIFSAPILLPALCELFEKHNALENLQAFISNNAKTIYGLDNLPSKKARLSKKPFIVPTHALCLNEKIAILRGGETLSWNLQEIA.

2 residues coordinate Zn(2+): H12 and H14. Substrate is bound by residues 14–16 (HVR) and N40. Residues K94, H133, H167, and D239 each coordinate Zn(2+). Residue K94 is modified to N6-carboxylysine. Residue H133 coordinates substrate. D239 is a catalytic residue. H243 and A255 together coordinate substrate.

This sequence belongs to the metallo-dependent hydrolases superfamily. DHOase family. Class II DHOase subfamily. Homodimer. Zn(2+) serves as cofactor.

It carries out the reaction (S)-dihydroorotate + H2O = N-carbamoyl-L-aspartate + H(+). It participates in pyrimidine metabolism; UMP biosynthesis via de novo pathway; (S)-dihydroorotate from bicarbonate: step 3/3. Functionally, catalyzes the reversible cyclization of carbamoyl aspartate to dihydroorotate. This Helicobacter pylori (strain HPAG1) protein is Dihydroorotase.